Here is a 622-residue protein sequence, read N- to C-terminus: uncharacterized protein (622 aa).

Positions 302, 306, 310, and 521 each coordinate [4Fe-4S] cluster.

It belongs to the AOR/FOR family. [4Fe-4S] cluster serves as cofactor.

This is an uncharacterized protein from Methanocaldococcus jannaschii (strain ATCC 43067 / DSM 2661 / JAL-1 / JCM 10045 / NBRC 100440) (Methanococcus jannaschii).